The following is a 610-amino-acid chain: Chaperone protein DnaK (610 aa).

Residue Thr173 is modified to Phosphothreonine; by autocatalysis. Disordered stretches follow at residues 525–544 (ENIGEEDKKSAEEKKDALKT) and 576–610 (AAQQQQQAQGANAGQNNDSTVEDAEFKEVKDDDKK). The span at 529–542 (EEDKKSAEEKKDAL) shows a compositional bias: basic and acidic residues. Over residues 576–592 (AAQQQQQAQGANAGQNN) the composition is skewed to low complexity. Residues 599 to 610 (AEFKEVKDDDKK) show a composition bias toward basic and acidic residues.

Belongs to the heat shock protein 70 family.

Functionally, acts as a chaperone. The protein is Chaperone protein DnaK of Staphylococcus aureus (strain Mu3 / ATCC 700698).